Consider the following 298-residue polypeptide: Anamorsin homolog (298 aa).

The N-terminal SAM-like domain stretch occupies residues 1-143 (MTQLIITYQS…IKAEKPSWKP (143 aa)). The segment at 143–162 (PEEGKVLVDDIDLEGSVPDI) is linker. The [2Fe-2S] cluster site is built by Cys-175, Cys-182, Cys-185, and Cys-187. The tract at residues 175–187 (CKSKERACNNCNC) is fe-S binding site A. [4Fe-4S] cluster is bound by residues Cys-218, Cys-221, Cys-229, and Cys-232. 2 consecutive short sequence motifs (cx2C motif) follow at residues 218–221 (CGNC) and 229–232 (CSGC). A fe-S binding site B region spans residues 218–232 (CGNCYLGDAFRCSGC).

It belongs to the anamorsin family. As to quaternary structure, monomer. It depends on [2Fe-2S] cluster as a cofactor. [4Fe-4S] cluster serves as cofactor.

It localises to the cytoplasm. The protein resides in the mitochondrion intermembrane space. Component of the cytosolic iron-sulfur (Fe-S) protein assembly (CIA) machinery. Required for the maturation of extramitochondrial Fe-S proteins. Part of an electron transfer chain functioning in an early step of cytosolic Fe-S biogenesis, facilitating the de novo assembly of a [4Fe-4S] cluster on the cytosolic Fe-S scaffold complex. Electrons are transferred from NADPH via a FAD- and FMN-containing diflavin oxidoreductase. Together with the diflavin oxidoreductase, also required for the assembly of the diferric tyrosyl radical cofactor of ribonucleotide reductase (RNR), probably by providing electrons for reduction during radical cofactor maturation in the catalytic small subunit. The sequence is that of Anamorsin homolog from Cryptosporidium hominis.